We begin with the raw amino-acid sequence, 310 residues long: Olfactory receptor 2A25 (310 aa).

Residues 1 to 24 lie on the Extracellular side of the membrane; sequence MGGNQTSITEFLLLGFPIGPRIQM. An N-linked (GlcNAc...) asparagine glycan is attached at asparagine 4. The chain crosses the membrane as a helical span at residues 25–48; sequence LLFGLFSLFYIFILLGNGTILGLI. Over 49-56 the chain is Cytoplasmic; the sequence is SLDSRLHT. A helical transmembrane segment spans residues 57-78; the sequence is PMYFFLSHLAVVDIACACSTVP. Residues 79–99 lie on the Extracellular side of the membrane; the sequence is QMLVNLLHPAKPISFAGCMTQ. Cysteine 96 and cysteine 188 are joined by a disulfide. A helical membrane pass occupies residues 100–119; the sequence is MFLFLSFAHTECLLLVVMSY. Residues 120 to 138 lie on the Cytoplasmic side of the membrane; that stretch reads DRYVAICHPLRYSTIMTWK. The helical transmembrane segment at 139 to 157 threads the bilayer; sequence VCITLALTSWILGVLLALV. The Extracellular portion of the chain corresponds to 158 to 195; that stretch reads HLVLLLPLSFCGPQKLNHFFCEIMAVLKLACADTHINE. The helical transmembrane segment at 196–218 threads the bilayer; it reads VMVLAGAVSVLVGAFFSTVISYV. Residues 219-235 are Cytoplasmic-facing; it reads HILCAILKIQSGEGCQK. Residues 236–258 traverse the membrane as a helical segment; sequence AFSICSSHLCVVGLFYGTAIIMY. Topologically, residues 259–271 are extracellular; that stretch reads VEPQYESPKEQKK. A helical transmembrane segment spans residues 272–291; that stretch reads YLLLFHSLFNPMLNPLIYSL. Over 292-310 the chain is Cytoplasmic; it reads RNKEVQGTLKRMLEKKRTS.

The protein belongs to the G-protein coupled receptor 1 family.

The protein localises to the cell membrane. In terms of biological role, odorant receptor. The chain is Olfactory receptor 2A25 (OR2A25) from Homo sapiens (Human).